A 99-amino-acid polypeptide reads, in one-letter code: High mobility group nucleosome-binding domain-containing protein 3 (99 aa).

Basic and acidic residues-rich tracts occupy residues 1 to 25 (MPKR…EPTR) and 39 to 53 (PESK…KEPG). Residues 1–99 (MPKRKSPENT…RTESIEKEGE (99 aa)) are disordered. Serine 6 is subject to Phosphoserine. Threonine 10 is modified (phosphothreonine). A phosphoserine mark is found at serine 78 and serine 93. Residues 83–99 (TKVEEAQRTESIEKEGE) show a composition bias toward basic and acidic residues.

This sequence belongs to the HMGN family. As to quaternary structure, interacts with the ligand binding domain of the thyroid receptor (TR) (in vitro). Requires the presence of thyroid hormone for its interaction. Interacts with transcriptional regulator SEHBP. Interacts with nucleosomes. In terms of tissue distribution, expressed in the brain, eye, prostate, thyroid, kidney, testis, glial cells and insulin-producing cells of the Langerhans pancreatic islets. In the brain, expressed in the lateral olfactory tract, anterior commissure, corpus callosum, internal capsule, fornix, stria medullans, optic tract, axon bundles, Purkinje cell layer and granular layer of the cerebellum. In retina, expressed in the nuclei of cells in the inner nuclear layer including amacrine, bipolar and horizontal neurons and in the nuclei of ganglion neurons. Detected at low levels in the liver.

It is found in the nucleus. In terms of biological role, binds to nucleosomes, regulating chromatin structure and consequently, chromatin-dependent processes such as transcription, DNA replication and DNA repair. Affects both insulin and glucagon levels and modulates the expression of pancreatic genes involved in insulin secretion. Regulates the expression of the glucose transporter SLC2A2 by binding specifically to its promoter region and recruiting PDX1 and additional transcription factors. Regulates the expression of SLC6A9, a glycine transporter which regulates the glycine concentration in synaptic junctions in the central nervous system, by binding to its transcription start site. May play a role in ocular development and astrocyte function. This is High mobility group nucleosome-binding domain-containing protein 3 (Hmgn3) from Mus musculus (Mouse).